The primary structure comprises 261 residues: Early E1A protein (261 aa).

The interaction with RB1 in competition with E2F1 stretch occupies residues 43–51; that stretch reads PTLHDLYDL. The tract at residues 78–149 is interaction with UBE2I; sequence EGLDINPPPE…VNEGVKAASD (72 aa). The short motif at 106–110 is the PXLXP motif, interaction with host ZMYND11 element; the sequence is PDLGA. An LXCXE motif, interaction with host RB1 and TMEM173/STING motif is present at residues 115–119; it reads LRCYE. Residues 163–183 fold into a zinc finger; sequence CKSCEFHRNNTGMKELLCSLC. The segment at 197–261 is disordered; it reads SDDESPSPDS…DLSTRKLPRQ (65 aa). A compositionally biased stretch (low complexity) spans 203 to 212; the sequence is SPDSTTSPPE. The PXDLS motif, CTBP-binding motif lies at 250–254; sequence PLDLS. The short motif at 256 to 261 is the Nuclear localization signal element; that stretch reads RKLPRQ.

This sequence belongs to the adenoviridae E1A protein family. As to quaternary structure, interacts with host UBE2I; this interaction interferes with polySUMOylation. Interacts with host RB1; this interaction induces the aberrant dissociation of RB1-E2F1 complex thereby disrupting the activity of RB1 and activating E2F1-regulated genes. Interacts with host ATF7; the interaction enhances ATF7-mediated viral transactivation activity which requires the zinc binding domains of both proteins. Isoform early E1A 32 kDa protein and isoform early E1A 26 kDa protein interact (via N-terminus) with CUL1 and E3 ubiquitin ligase RBX1; these interactions inhibit RBX1-CUL1-dependent elongation reaction of ubiquitin chains and attenuate ubiquitination of SCF(FBXW7) target proteins. Interacts (via PXLXP motif) with host ZMYND11/BS69 (via MYND-type zinc finger); this interaction inhibits E1A mediated transactivation. Interacts with host EP300; this interaction stimulates the acetylation of RB1 by recruiting EP300 and RB1 into a multimeric-protein complex. Interacts with host CTBP1 and CTBP2; this interaction seems to potentiate viral replication. Interacts with host DCAF7. Interacts with host DYRK1A. Interacts with host KPNA4; this interaction allows E1A import into the host nucleus. Interacts with host EP400; this interaction stabilizes MYC. Interacts with host TBP protein; this interaction probably disrupts the TBP-TATA complex. Interacts (via LXCXE motif) with host TMEM173/STING; this interaction impairs the ability of TMEM173/STING to sense cytosolic DNA and promote the production of type I interferon (IFN-alpha and IFN-beta). Interacts (via C-terminus) with host ZBED1/hDREF (via C-terminus); the interaction is direct.

It is found in the host nucleus. Plays a role in viral genome replication by driving entry of quiescent cells into the cell cycle. Stimulation of progression from G1 to S phase allows the virus to efficiently use the cellular DNA replicating machinery to achieve viral genome replication. E1A protein has both transforming and trans-activating activities. Induces the disassembly of the E2F1 transcription factor from RB1 by direct competition for the same binding site on RB1, with subsequent transcriptional activation of E2F1-regulated S-phase genes and of the E2 region of the adenoviral genome. Release of E2F1 leads to the ARF-mediated inhibition of MDM2 and causes TP53/p53 to accumulate because it is not targeted for degradation by MDM2-mediated ubiquitination anymore. This increase in TP53, in turn, would arrest the cell proliferation and direct its death but this effect is counteracted by the viral protein E1B-55K. Inactivation of the ability of RB1 to arrest the cell cycle is critical for cellular transformation, uncontrolled cellular growth and proliferation induced by viral infection. Interaction with RBX1 and CUL1 inhibits ubiquitination of the proteins targeted by SCF(FBXW7) ubiquitin ligase complex, and may be linked to unregulated host cell proliferation. The tumorigenesis-restraining activity of E1A may be related to the disruption of the host CtBP-CtIP complex through the CtBP binding motif. Interaction with host TMEM173/STING impairs the ability of TMEM173/STING to sense cytosolic DNA and promote the production of type I interferon (IFN-alpha and IFN-beta). Promotes the sumoylation of host ZBED1/hDREF with SUMO1. This is Early E1A protein from Human adenovirus B serotype 7 (HAdV-7).